A 622-amino-acid polypeptide reads, in one-letter code: MIEKLTFGLFKKEDARSFMRLMAYVRPYKIRIVAALIAIFGVAATESYLAAFIAPLINHGFSAPAAPPDLSAAAGILSTLQNWREQFTYMVWGTENKIWTVPLFLIILVVIRGICRFTSTYLMTWVSVMTISKIRKDMFAKMLTLSSRYHQETPSGTVLMNMLNLTEQSVSNASDIFTVLTRDTMIVTGLTIVLLYLNWQLSLIVVLMFPLLSLLSRYYRDRLKHVISDSQKSIGTMNNVIAETHQGHRVVKLFNGQAQAANRFDAVNRTIVRLSKKITQATAAHSPFSELIASIALAVVIFIALWQSQNGYTTIGEFMAFIVAMLQMYAPIKSLANISIPMQTMFLAADGVCAFLDTPPEQDKGTLAPQRVEGRISFRNVDVEYRSDGIKALDNFNLDIRQGERVALVGRSGSGKSTVVNLLPRFVEPSAGNICIDGIDIADIKLDCLRAQFALVSQDVFLFDDTLFENVRYSRPDAGEAEVLSALQAANLQSLIDASPLGLHQPIGSNGSNLSGGQRQRVAIARAILKDAPILLLDEATSALDNESERLVQQALERLMENRTGIIVAHRLTTVESADRIIVMDGGKIIEQGTHDQLMFQNGYYTMLRNISGKDTAAVQTA.

5 helical membrane passes run 32 to 52, 91 to 111, 192 to 212, 286 to 306, and 312 to 332; these read IVAA…LAAF, VWGT…LVVI, IVLL…FPLL, SPFS…IALW, and YTTI…YAPI. One can recognise an ABC transmembrane type-1 domain in the interval 33–344; that stretch reads VAALIAIFGV…LANISIPMQT (312 aa). In terms of domain architecture, ABC transporter spans 378-611; the sequence is FRNVDVEYRS…NGYYTMLRNI (234 aa). 410-417 contributes to the ATP binding site; that stretch reads GRSGSGKS.

The protein belongs to the ABC transporter superfamily. Lipid exporter (TC 3.A.1.106) family. In terms of assembly, homodimer.

Its subcellular location is the cell inner membrane. The enzyme catalyses ATP + H2O + lipid A-core oligosaccharideSide 1 = ADP + phosphate + lipid A-core oligosaccharideSide 2.. Involved in lipopolysaccharide (LPS) biosynthesis. Translocates lipid A-core from the inner to the outer leaflet of the inner membrane. Transmembrane domains (TMD) form a pore in the inner membrane and the ATP-binding domain (NBD) is responsible for energy generation. This Neisseria gonorrhoeae (strain ATCC 700825 / FA 1090) protein is ATP-dependent lipid A-core flippase.